Here is a 63-residue protein sequence, read N- to C-terminus: MATATTKTVKVRQTGSPIRRNAVQRATLAGLGLNKLGRESELEDTPSVRGMIRKVQHLLEIVE.

The protein belongs to the universal ribosomal protein uL30 family. In terms of assembly, part of the 50S ribosomal subunit.

The chain is Large ribosomal subunit protein uL30 from Caulobacter sp. (strain K31).